A 446-amino-acid chain; its full sequence is GTPase Der (446 aa).

2 consecutive EngA-type G domains span residues 3-168 and 181-354; these read PVIA…YAGQ and IKIA…KAAM. Residues 9–16, 57–61, 120–123, 187–194, 234–238, and 299–302 contribute to the GTP site; these read GRPNVGKS, DTGGF, NKAE, DTAGL, and NKWD. One can recognise a KH-like domain in the interval 355 to 439; the sequence is SKLPTPKLTR…PLRIEFRSST (85 aa).

It belongs to the TRAFAC class TrmE-Era-EngA-EngB-Septin-like GTPase superfamily. EngA (Der) GTPase family. Associates with the 50S ribosomal subunit.

In terms of biological role, GTPase that plays an essential role in the late steps of ribosome biogenesis. The polypeptide is GTPase Der (Paraburkholderia phymatum (strain DSM 17167 / CIP 108236 / LMG 21445 / STM815) (Burkholderia phymatum)).